Consider the following 785-residue polypeptide: MSGLFAKLDPRRVQWGANWFAFRSRVLRTKPVESMLETSGGTGAHGTKLARVLSTVDLVSLGVGSCVGTGMYVVSGLVAKEMAGPGVIVSFIIAAVASILSGVCYAEFGVRVPKTTGSAYTYSYVTVGEFVAFFIGWNLILEYLIGTAAGASALSSMFDSLANHSISGFMINHIGTLNGLGKGEQSYPDILALVIGILVTVIVALGVKNSVGFNNVLNVINLVVWVFIMIAGLFFVSGSNWDEGRFLPYGWSGVMQGAATCFYAFIGFDIIATTGEEAKSPNTSIPYAITASLVTCLTAYVSVSVILTLMVPYTEIDSDAPLMEMFSLHGFQTAKYIVAIGSIAGLTVSLLGSLFPMPRVIYAMAGDGLLFRFLAHVSTYTETPAVACVVSGFLSALLALLVSLRDLIEMMSIGTLLAYTLVSVCVLLLRYQPEGDIHGFVNFLSEQNSKRKEGVLAECEKEACSPVSEGDDYGGVPTNTCGAKNLPSLGDNEMLIGKPDKSTYTASHPNYGTVDMSSGIESDETDSAYLLKLKKLLGPRYYTMRIRLGLPGKMDRPTVATGRIVTRCVVLLFILIFCFCSLIIFGSGQIADGQWWAVLLLVVLLLVLTLLVFIIIQQPENPKRLPYMAPCVPFVPASAMLVNVYLMLKLSTITWIRFGVWCFVGVLIYFGYGMWNSTLEITAREEEAHASTYQRYDMGVDDNFAVDDDLYPSGDQGPFQNWGKGGQQKQPQQEQSEPQSDGLDRLDNHRTSSSSSHSRAKSKASKPSPGFEALVVDDDLDDPLE.

Transmembrane regions (helical) follow at residues 58–78, 83–103, 119–141, 187–207, 216–236, 251–271, 291–311, 337–357, 360–380, 384–404, 407–427, 568–588, 596–616, 628–648, and 655–675; these read LVSL…SGLV, AGPG…LSGV, AYTY…NLIL, YPDI…ALGV, VLNV…LFFV, WSGV…FDII, ASLV…TLMV, IVAI…LFPM, VIYA…VSTY, PAVA…LVSL, LIEM…VCVL, CVVL…FGSG, WAVL…FIII, MAPC…YLML, and WIRF…YGMW. The tract at residues 715–785 is disordered; the sequence is DQGPFQNWGK…VDDDLDDPLE (71 aa). Positions 727–740 are enriched in low complexity; that stretch reads QQKQPQQEQSEPQS. The span at 775–785 shows a compositional bias: acidic residues; the sequence is VVDDDLDDPLE.

The protein belongs to the amino acid-polyamine-organocation (APC) superfamily.

The protein localises to the lysosome membrane. Its function is as follows. May be involved in arginine transport. The protein is Probable cationic amino acid transporter (slc7a14a) of Danio rerio (Zebrafish).